The following is a 405-amino-acid chain: Serine-type anaerobic sulfatase-maturating enzyme (405 aa).

The Radical SAM core domain occupies 18–249; that stretch reads PRSPVPFHIL…QWRKRCDRGR (232 aa). Residues Cys-35 and Cys-39 each coordinate [4Fe-4S] cluster. An S-adenosyl-L-methionine-binding site is contributed by Tyr-41. A [4Fe-4S] cluster-binding site is contributed by Cys-42. Residues Gly-84, Ser-140, and Arg-152 each contribute to the S-adenosyl-L-methionine site. Cys-270, Cys-276, and Cys-291 together coordinate [4Fe-4S] cluster. The active-site Proton acceptor is the Asp-292. [4Fe-4S] cluster is bound by residues Cys-331, Cys-334, Cys-340, Cys-344, and Cys-357.

It belongs to the radical SAM superfamily. Anaerobic sulfatase-maturating enzyme family. Monomer. Interacts with AtsA prior to its export to the periplasm. It depends on [4Fe-4S] cluster as a cofactor.

It localises to the cytoplasm. It carries out the reaction L-seryl-[sulfatase] + S-adenosyl-L-methionine = 3-oxo-L-alanyl-[sulfatase] + 5'-deoxyadenosine + L-methionine + H(+). It participates in protein modification; sulfatase oxidation. Functionally, involved in 'Ser-type' sulfatase maturation under anaerobic conditions. Catalyzes the post-translational modification of serine ('Ser-72' in the arylsulfatase AtsA) into 3-oxoalanine (also known as C(alpha)-formylglycine (FGly)), by a free radical chemical mechanism initiated via the reductive cleavage of S-adenosyl-L-methionine (SAM). This chain is Serine-type anaerobic sulfatase-maturating enzyme, found in Klebsiella aerogenes (Enterobacter aerogenes).